We begin with the raw amino-acid sequence, 867 residues long: Piwi-like protein 1 (867 aa).

A compositionally biased stretch (basic residues) spans 1–11 (MTGRARARARG). Residues 1 to 70 (MTGRARARAR…QRGPQDAPKT (70 aa)) are disordered. Positions 28 to 44 (AQKTLPSHPSEQRQSLQ) are enriched in polar residues. A PAZ domain is found at 286 to 397 (TVLDFMYSLY…LIPELCYLTG (112 aa)). A required for binding 2'-O-methylated 3'-end of piRNAs region spans residues 324–326 (TYR). The segment at 485-621 (SRETRVAPLI…LQMNCKMGGE (137 aa)) is MID region. A Piwi domain is found at 561-853 (IVVCILSSTR…LAFLVGQSIH (293 aa)). Active-site residues include Asp-638, Glu-676, Asp-708, and His-842.

The protein belongs to the argonaute family. Piwi subfamily. It depends on Mg(2+) as a cofactor. In terms of processing, methylated on arginine residues; required for the interaction with Tudor domain-containing protein and subsequent localization to the meiotic nuage, also named P granule.

The protein localises to the cytoplasm. Endoribonuclease that plays a central role in postnatal germ cells by repressing transposable elements and preventing their mobilization, which is essential for the germline integrity. Acts via the piRNA metabolic process, which mediates the repression of transposable elements during meiosis by forming complexes composed of piRNAs and Piwi proteins and govern the methylation and subsequent repression of transposons. Directly binds methylated piRNAs, a class of 24 to 30 nucleotide RNAs that are generated by a Dicer-independent mechanism and are primarily derived from transposons and other repeated sequence elements. Strongly prefers a uridine in the first position of their guide (g1U preference, also named 1U-bias). Besides their function in transposable elements repression, piRNAs are probably involved in other processes during meiosis such as translation regulation. Not involved in the piRNA amplification loop, also named ping-pong amplification cycle. Acts as an endoribonuclease that cleaves transposon messenger RNAs. The sequence is that of Piwi-like protein 1 (PIWIL1) from Gallus gallus (Chicken).